The chain runs to 430 residues: uncharacterized protein (430 aa).

The next 12 membrane-spanning stretches (helical) occupy residues 36–56 (LFVVSISQIFGGAGLAAGVTV), 69–89 (AFAGLPSALFTLGSAGSALIV), 100–122 (TGLSAGFMIGGLGAIGVIMAAII), 126–148 (FLLFISLLIYGAGTATNLQARYA), 160–180 (TAVSITMVFTTFGAVAGPSLV), 197–217 (GPFILAAAAYMLAGVVLFIML), 253–273 (IIVGATVMVLTQIVMVAIMTM), 285–305 (LGAVGLVIGFHIGAMYLPSLV), 317–337 (AMAISSGTTLLLAGVIAAFAP), 340–360 (SMILLVIALSLLGLGWNFGLI), 384–404 (VLIALSGAAGGALSGMIVAGS), and 406–426 (YLALSLIGGILSLLLIPVVVW).

The protein belongs to the major facilitator superfamily.

It is found in the cell membrane. This is an uncharacterized protein from Bacillus subtilis (strain 168).